The following is a 519-amino-acid chain: Glucoamylase GLA1 (519 aa).

An N-terminal signal peptide occupies residues 1–27 (MRFGVLISVFVAIVSALPLQEGPLNKR). 2 N-linked (GlcNAc...) asparagine glycosylation sites follow: Asn115 and Asn127. Trp166 serves as a coordination point for substrate. N-linked (GlcNAc...) asparagine glycosylation is present at Asn205. Asp234 acts as the Proton acceptor in catalysis. The active-site Proton donor is the Glu237.

The protein belongs to the glycosyl hydrolase 15 family.

The catalysed reaction is Hydrolysis of terminal (1-&gt;4)-linked alpha-D-glucose residues successively from non-reducing ends of the chains with release of beta-D-glucose.. This is Glucoamylase GLA1 (GLA1) from Saccharomycopsis fibuligera (Yeast).